Consider the following 821-residue polypeptide: MSPSPAERAEDLRRQIAQANRAYHELDAPEIPDVDYDRMVRELEALEREHPELARADSPTQQVGARPSGRFAEVRHAVPMLSLSNAFSDEEVADFVRRIDERLGRRSLQFSAEPKMDGLAISLRYEEGHFVLGATRGDGSTGEDVTANLREIGDIPKRLNGKDWPDVLEVRGEVYMARADFEAYNERARLQGGKVLANPRNAAAGSLRQLDPKISAQRKLSFFAYGTGEVQGGELPDTHSGTLAQLGSWGFPVSALCRVVDGTDGLLGYYRDIGERRDGLPFDIDGVVYKLDDRAGQQAMGFVSRAPRWAIAHKFPAQEQSTTVEAIEIQIGRTGAATPVARLAPVAVAGVIVSNATLHNADQIARLDVRVGDSVIVRRAGDVIPEVVSVILDRRPQGTTPWQMPTQCPVCGSEIVREEGAAAWRCSGELSCPAQRKEAIAHFASRRAMDIDGLGDKYIETLVDAGIVKGVADLYRLSRDQLLHLKLVLDAEDPSALAAALKLHLPAEGSGAVLNAVLKLDGNDPGWRAQALVQPASFEWNTKKIATKWADNLIAAIDASRAATLERLLFALGIEHVGESTAKALAQWFGDLELIRHLPWPLFKRVPDIGGEVARSLGHFFEQQGNQQAIDDLLQVGQVRISDAHAPSAKLREGLDLAQLLVESEIPGITRLRAEKLVAALPSAQAVLDAEHGQFVNAGLPDDTARGLAEWLDAEGHGAMLLAAEKAMRQILAKAPALAEIVAGPLDGQTVVLTGTLAQLTRDAAKERLEALGAKVSGSVSKKTSFVVAGTEAGSKLDKAQSLGVPVWDEDRLLAYLAEHE.

Residues 33–37 (DVDYD), 82–83 (SL), and Glu-113 contribute to the NAD(+) site. Residue Lys-115 is the N6-AMP-lysine intermediate of the active site. Positions 136, 173, 290, and 314 each coordinate NAD(+). Zn(2+) is bound by residues Cys-408, Cys-411, Cys-426, and Cys-432. The region spanning 741–821 (IVAGPLDGQT…RLLAYLAEHE (81 aa)) is the BRCT domain.

The protein belongs to the NAD-dependent DNA ligase family. LigA subfamily. Requires Mg(2+) as cofactor. The cofactor is Mn(2+).

The catalysed reaction is NAD(+) + (deoxyribonucleotide)n-3'-hydroxyl + 5'-phospho-(deoxyribonucleotide)m = (deoxyribonucleotide)n+m + AMP + beta-nicotinamide D-nucleotide.. Its function is as follows. DNA ligase that catalyzes the formation of phosphodiester linkages between 5'-phosphoryl and 3'-hydroxyl groups in double-stranded DNA using NAD as a coenzyme and as the energy source for the reaction. It is essential for DNA replication and repair of damaged DNA. This chain is DNA ligase, found in Stenotrophomonas maltophilia (strain R551-3).